The primary structure comprises 322 residues: Deoxyhypusine hydroxylase (322 aa).

HEAT-like PBS-type repeat units follow at residues 76-102 and 109-135; these read LKHE…VLAD and VRHE…YFKE. His78, Glu79, His111, Glu112, His236, Glu237, His269, and Glu270 together coordinate Fe cation. The stretch at 267 to 293 is one HEAT-like PBS-type 3 repeat; it reads VRHEAAEALGSIATDDVLPVLKEHLKD.

It belongs to the deoxyhypusine hydroxylase family. The cofactor is Fe(2+).

The protein resides in the cytoplasm. Its subcellular location is the nucleus. The catalysed reaction is [eIF5A protein]-deoxyhypusine + AH2 + O2 = [eIF5A protein]-hypusine + A + H2O. The protein operates within protein modification; eIF5A hypusination. Its function is as follows. Catalyzes the hydroxylation of the N(6)-(4-aminobutyl)-L-lysine intermediate to form hypusine, an essential post-translational modification only found in mature eIF-5A factor. This Kluyveromyces lactis (strain ATCC 8585 / CBS 2359 / DSM 70799 / NBRC 1267 / NRRL Y-1140 / WM37) (Yeast) protein is Deoxyhypusine hydroxylase.